Consider the following 150-residue polypeptide: Large ribosomal subunit protein bL9 (150 aa).

The protein belongs to the bacterial ribosomal protein bL9 family.

Binds to the 23S rRNA. This is Large ribosomal subunit protein bL9 from Cupriavidus metallidurans (strain ATCC 43123 / DSM 2839 / NBRC 102507 / CH34) (Ralstonia metallidurans).